A 1242-amino-acid polypeptide reads, in one-letter code: DNA excision repair protein ERCC-6-like (1242 aa).

Position 14 is a phosphoserine (S14). A TPR 1 repeat occupies 21–54 (YLRYVKEAKEATKNGDLEQALKLFNLAKDIFPNE). Residues 109 to 277 (SLYRDGRRGG…WSLFDFACQG (169 aa)) form the Helicase ATP-binding domain. 122-129 (DDMGLGKT) serves as a coordination point for ATP. The DEAH box motif lies at 228-231 (DEAH). The Helicase C-terminal domain occupies 466–626 (FLMDLLKKLR…PFRYFSKQEL (161 aa)). Phosphoserine is present on residues S755 and S773. T815 is modified (phosphothreonine). S963, S989, S998, and S1021 each carry phosphoserine. Residue T1055 is modified to Phosphothreonine. Phosphoserine occurs at positions 1061, 1090, and 1110. Positions 1103–1181 (EERLDNSSEA…LSDGQLVDSP (79 aa)) are disordered. 2 stretches are compositionally biased toward basic and acidic residues: residues 1105-1121 (RLDNSSEAKVVEDHLEE) and 1130-1140 (APEHTKEDPSR). A compositionally biased stretch (polar residues) spans 1141–1156 (ETLSSENKSSQLSTSK). Phosphoserine occurs at positions 1173 and 1180. The TPR 2 repeat unit spans residues 1192–1225 (YDTLVLHGKELKECGKIQEALDCLVKALDIKSSD).

This sequence belongs to the SNF2/RAD54 helicase family. In terms of assembly, interacts with PLK1, which phosphorylates it. Both proteins are mutually dependent on each other for correct subcellular localization. Interacts (via N-terminal TPR repeat) with BEND3 (via BEN domains 1 and 3); the interaction is direct. In terms of processing, phosphorylation by PLK1 prevents the association with chromosome arms and restricts its localization to the kinetochore-centromere region.

It localises to the chromosome. The protein localises to the centromere. The protein resides in the kinetochore. The enzyme catalyses ATP + H2O = ADP + phosphate + H(+). In terms of biological role, DNA helicase that acts as a tension sensor that associates with catenated DNA which is stretched under tension until it is resolved during anaphase. Functions as ATP-dependent DNA translocase. Can promote Holliday junction branch migration (in vitro). This is DNA excision repair protein ERCC-6-like (ERCC6L) from Bos taurus (Bovine).